Consider the following 499-residue polypeptide: Probable cytosol aminopeptidase (499 aa).

Mn(2+)-binding residues include lysine 269 and aspartate 274. Lysine 281 is a catalytic residue. Positions 292, 351, and 353 each coordinate Mn(2+). Arginine 355 is a catalytic residue.

This sequence belongs to the peptidase M17 family. Requires Mn(2+) as cofactor.

The protein resides in the cytoplasm. The enzyme catalyses Release of an N-terminal amino acid, Xaa-|-Yaa-, in which Xaa is preferably Leu, but may be other amino acids including Pro although not Arg or Lys, and Yaa may be Pro. Amino acid amides and methyl esters are also readily hydrolyzed, but rates on arylamides are exceedingly low.. It catalyses the reaction Release of an N-terminal amino acid, preferentially leucine, but not glutamic or aspartic acids.. Functionally, presumably involved in the processing and regular turnover of intracellular proteins. Catalyzes the removal of unsubstituted N-terminal amino acids from various peptides. The protein is Probable cytosol aminopeptidase of Haemophilus ducreyi (strain 35000HP / ATCC 700724).